A 1007-amino-acid chain; its full sequence is Glutamate receptor ionotropic, delta-2 (1007 aa).

The N-terminal stretch at 1 to 23 (MEVFPLLLFLSFCWSRTWDLATA) is a signal peptide. The tract at residues 24–345 (DSIIHIGAIF…NAFHKKLEDR (322 aa)) is interaction with CBLN1 homotrimer. Topologically, residues 24–566 (DSIIHIGAIF…DMFACLAPFD (543 aa)) are extracellular. 3 disulfide bridges follow: Cys-83/Cys-355, Cys-99/Cys-131, and Cys-298/Cys-310. A glycan (N-linked (GlcNAc...) asparagine) is linked at Asn-293. Asn-426 is a glycosylation site (N-linked (GlcNAc...) asparagine). Glu-531, Val-534, and Asp-535 together coordinate Ca(2+). A helical transmembrane segment spans residues 567 to 587 (LSLWACIAGTVLLVGLLVYLL). Residues 588 to 635 (NWLNPPRLQMGSMTSTTLYNSMWFVYGSFVQQGGEVPYTTLATRMMMG) lie on the Cytoplasmic side of the membrane. Residues 636–656 (AWWLFALIVISSYTANLAAFL) form a helical membrane-spanning segment. Topologically, residues 657–830 (TITRIESSIQ…QKGGALDIKS (174 aa)) are extracellular. Residues Asn-713 and Asn-716 are each glycosylated (N-linked (GlcNAc...) asparagine). Ca(2+) is bound by residues Asp-753, Asp-755, and Ser-757. The chain crosses the membrane as a helical span at residues 831 to 851 (LAGVFCILAAGIVLSCLIAVL). At 852 to 1007 (ETWWSRRKGS…GNDPDRGTSI (156 aa)) the chain is on the cytoplasmic side. A Phosphoserine modification is found at Ser-883. Thr-886 carries the post-translational modification Phosphothreonine. Ser-890 bears the Phosphoserine mark. Residues 921 to 991 (DFRNTHITTT…MSSIPYQPTP (71 aa)) are interaction with AP4M1. Positions 1005-1007 (TSI) match the PDZ-binding motif. Residue Ser-1006 is modified to Phosphoserine.

The protein belongs to the glutamate-gated ion channel (TC 1.A.10.1) family. GRID2 subfamily. As to quaternary structure, tetramer; dimer of dimers. Interacts with EML2, MAGI2 (via PDZ domains) and AP4M1. Interacts with BECN1, GOPC, GRID2IP, SHANK1 and SHANK2. Interacts with CBLN2, but not with CBLN4. Interacts with CBLN1 (via C1q domain); the interaction is CBLN1-NRX1 complex formation-dependent; CBLN1-binding is calcium-independent; CBLN1 hexamers anchor GRID2 N-terminal domain dimers to monomeric NRXN1 isoform beta; promotes synaptogenesis and mediates the D-Serine-dependent long term depression signals and AMPA receptor endocytosis. In terms of tissue distribution, expressed selectively in cerebellar Purkinje cells where it is localized in dendritic spines.

It localises to the postsynaptic cell membrane. It carries out the reaction Ca(2+)(in) = Ca(2+)(out). It catalyses the reaction Na(+)(in) = Na(+)(out). Member of the ionotropic glutamate receptor family, which plays a crucial role in synaptic organization and signal transduction in the central nervous system. Although it shares structural features with ionotropic glutamate receptors, does not bind glutamate as a primary ligand. Promotes synaptogenesis and mediates the D-Serine-dependent long term depression signals and AMPA receptor endocytosis of cerebellar parallel fiber-Purkinje cell (PF-PC) synapses through the NRX1B-CBLN1-GRID2 triad complex. In the presence of neurexins and cerebellins, forms cation-selective channels that are proposed to be gated by glycine and D-serine. However, recent research disputes this ligand-gated cation channel activity. Cation-selective ion channel activity can be triggered by GRM1 in Purkinje cells. The protein is Glutamate receptor ionotropic, delta-2 (Grid2) of Mus musculus (Mouse).